We begin with the raw amino-acid sequence, 702 residues long: Ribosomal RNA large subunit methyltransferase K/L (702 aa).

The THUMP domain occupies 43-154 (LIYQSLMWSR…KETASIALDL (112 aa)).

The protein belongs to the methyltransferase superfamily. RlmKL family.

It localises to the cytoplasm. It catalyses the reaction guanosine(2445) in 23S rRNA + S-adenosyl-L-methionine = N(2)-methylguanosine(2445) in 23S rRNA + S-adenosyl-L-homocysteine + H(+). The enzyme catalyses guanosine(2069) in 23S rRNA + S-adenosyl-L-methionine = N(2)-methylguanosine(2069) in 23S rRNA + S-adenosyl-L-homocysteine + H(+). Functionally, specifically methylates the guanine in position 2445 (m2G2445) and the guanine in position 2069 (m7G2069) of 23S rRNA. The polypeptide is Ribosomal RNA large subunit methyltransferase K/L (Salmonella gallinarum (strain 287/91 / NCTC 13346)).